The primary structure comprises 439 residues: GTPase Der (439 aa).

EngA-type G domains are found at residues Ala-2 to Gly-168 and Ile-181 to Thr-357. GTP contacts are provided by residues Gly-8–Ser-15, Asp-55–Val-59, Asn-118–Glu-121, Gly-187–Ser-194, Asp-234–Leu-238, and Asn-300–Asp-303. The 82-residue stretch at Thr-358 to Arg-439 folds into the KH-like domain.

This sequence belongs to the TRAFAC class TrmE-Era-EngA-EngB-Septin-like GTPase superfamily. EngA (Der) GTPase family. Associates with the 50S ribosomal subunit.

GTPase that plays an essential role in the late steps of ribosome biogenesis. The sequence is that of GTPase Der from Thermotoga sp. (strain RQ2).